The chain runs to 134 residues: Interleukin-5 (134 aa).

An N-terminal signal peptide occupies residues 1–19 (MRMLLHLSLLALGAAYVYA). O-linked (GalNAc...) threonine glycosylation is present at threonine 22. Asparagine 47 carries N-linked (GlcNAc...) asparagine glycosylation.

The protein belongs to the IL-5 family. Homodimer; disulfide-linked. Interacts with IL5RA. Interacts with CSF2RB. In terms of tissue distribution, present in peripheral blood mononuclear cells.

The protein localises to the secreted. Homodimeric cytokine expressed predominantly by T-lymphocytes and NK cells that plays an important role in the survival, differentiation, and chemotaxis of eosinophils. Also acts on activated and resting B-cells to induce immunoglobulin production, growth, and differentiation. Mechanistically, exerts its biological effects through a receptor composed of IL5RA subunit and the cytokine receptor common subunit beta/CSF2RB. Binding to the receptor leads to activation of various kinases including LYN, SYK and JAK2 and thereby propagates signals through the RAS-MAPK and JAK-STAT5 pathways respectively. This Homo sapiens (Human) protein is Interleukin-5 (IL5).